The following is a 428-amino-acid chain: Dihydroorotase (428 aa).

Residues His59 and His61 each contribute to the Zn(2+) site. Substrate is bound by residues 61-63 (HLR) and Asn93. The Zn(2+) site is built by Asp151, His178, and His231. Position 277 (Asn277) interacts with substrate. Residue Asp304 coordinates Zn(2+). The active site involves Asp304. Substrate is bound by residues His308 and 322–323 (FG).

This sequence belongs to the metallo-dependent hydrolases superfamily. DHOase family. Class I DHOase subfamily. The cofactor is Zn(2+).

The enzyme catalyses (S)-dihydroorotate + H2O = N-carbamoyl-L-aspartate + H(+). The protein operates within pyrimidine metabolism; UMP biosynthesis via de novo pathway; (S)-dihydroorotate from bicarbonate: step 3/3. Catalyzes the reversible cyclization of carbamoyl aspartate to dihydroorotate. The polypeptide is Dihydroorotase (Bacillus cereus (strain ZK / E33L)).